The chain runs to 258 residues: F-box/SPRY domain-containing protein 1 (258 aa).

Positions 6–54 (MEYAPNIPDNVLELIFSFLKLQDLRNCTLVCKSWYRFFCDENNEVWRAQ) constitute an F-box domain. Residues 64-256 (FKNDLLTVVP…ISMVYLGAPL (193 aa)) enclose the B30.2/SPRY domain.

It belongs to the FBXO45/Fsn family. As to quaternary structure, component of an E3 ubiquitin ligase complex composed of hiw and Fsn.

Its subcellular location is the synapse. Its pathway is protein modification; protein ubiquitination. Required in the presynaptic motoneuron to down-regulate the levels of wnd and restrain synaptic terminal growth at the neuromuscular junction (NMJ). The chain is F-box/SPRY domain-containing protein 1 from Anopheles gambiae (African malaria mosquito).